Here is a 664-residue protein sequence, read N- to C-terminus: Protein cueball (664 aa).

Residues 1–21 form the signal peptide; that stretch reads MRNLGIAVTFAVLLVIGYVTA. The Extracellular segment spans residues 22 to 552; the sequence is LEWDAVVTTD…VTYCKNSFNR (531 aa). Asn40, Asn140, and Asn188 each carry an N-linked (GlcNAc...) asparagine glycan. 3 LDL-receptor class B repeats span residues 115–157, 168–211, and 212–257; these read RKLY…ENHD, RHLY…DHYN, and NRIY…NSQY. EGF-like domains lie at 367–399, 402–438, and 473–510; these read EIPICNNFCVHGECVVGADSRPMCKCHAEFEGE, DRNICDGYCLNNGRCALSATGQRSCTCSKNFSGARCE, and EEYTCNNYCLHDGTCILNNDTMLVECRCGSEYTGKRCE. 8 disulfides stabilise this stretch: Cys371–Cys380, Cys375–Cys390, Cys406–Cys416, Cys410–Cys426, Cys428–Cys437, Cys477–Cys487, Cys481–Cys498, and Cys500–Cys509. The N-linked (GlcNAc...) asparagine glycan is linked to Asn431. Residue Asn491 is glycosylated (N-linked (GlcNAc...) asparagine). The N-linked (GlcNAc...) asparagine glycan is linked to Asn551. The chain crosses the membrane as a helical span at residues 553–573; that stretch reads TVVYVSLAFTASLVTLVTILC. Topologically, residues 574–664 are cytoplasmic; the sequence is TVRRMYERNR…KLPSCVAEKN (91 aa).

This sequence belongs to the cueball family.

The protein resides in the cell membrane. Its function is as follows. Has a role in spermatogenesis and oogenesis. The sequence is that of Protein cueball from Aedes aegypti (Yellowfever mosquito).